The primary structure comprises 339 residues: Fructose-1,6-bisphosphatase isozyme 2 (339 aa).

The tract at residues 3 to 10 (DRSPFETD) is important for interaction with ALDOA. AMP is bound by residues valine 18 and 28–32 (TGELT). Residues aspartate 69 and glutamate 98 each coordinate Mg(2+). Residue 113–114 (KY) coordinates AMP. 3 residues coordinate Mg(2+): aspartate 119, leucine 121, and aspartate 122. Position 122 (aspartate 122) interacts with substrate. Residue arginine 141 coordinates AMP. A Nuclear localization signal motif is present at residues 204–208 (KKKGK). 213–216 (NEGY) lines the substrate pocket. Residues tyrosine 216 and tyrosine 219 each carry the phosphotyrosine modification. Substrate is bound by residues 245 to 249 (YVGSM), tyrosine 265, and lysine 275. Glutamate 281 contacts Mg(2+).

Belongs to the FBPase class 1 family. In terms of assembly, homotetramer. Interacts with ALDOA; the interaction blocks inhibition by physiological concentrations of AMP and reduces inhibition by Ca(2+). Interacts with alpha-actinin and F-actin. Mg(2+) serves as cofactor.

It localises to the cell junction. Its subcellular location is the cytoplasm. The protein localises to the nucleus. It is found in the myofibril. The protein resides in the sarcomere. It localises to the z line. The enzyme catalyses beta-D-fructose 1,6-bisphosphate + H2O = beta-D-fructose 6-phosphate + phosphate. The protein operates within carbohydrate biosynthesis; gluconeogenesis. Its activity is regulated as follows. Subject to complex allosteric regulation. The enzyme can assume an active R-state, or an inactive T-state. Intermediate conformations may exist. AMP acts as an allosteric inhibitor. Fructose 2,6-bisphosphate acts as a competitive inhibitor. Strongly inhibited by Ca(2+). Functionally, catalyzes the hydrolysis of fructose 1,6-bisphosphate to fructose 6-phosphate in the presence of divalent cations and probably participates in glycogen synthesis from carbohydrate precursors, such as lactate. This chain is Fructose-1,6-bisphosphatase isozyme 2 (FBP2), found in Bos taurus (Bovine).